A 344-amino-acid chain; its full sequence is Eukaryotic translation initiation factor 3 subunit H (344 aa).

Positions Met1–Leu24 are disordered. Over residues Thr8–Thr23 the composition is skewed to low complexity. Residues Ile31–Leu165 form the MPN domain. Residues Ser256–Arg305 form a disordered region. Low complexity predominate over residues Lys261–Arg272.

Belongs to the eIF-3 subunit H family. Component of the eukaryotic translation initiation factor 3 (eIF-3) complex, which is composed of 13 subunits: eif3a, eif3b, eif3c, eif3d, eif3e, eif3f, eif3g, eif3h, eif3i, eif3j, eif3k, eif3l and eif3m.

It is found in the cytoplasm. Functionally, component of the eukaryotic translation initiation factor 3 (eIF-3) complex, which is involved in protein synthesis of a specialized repertoire of mRNAs and, together with other initiation factors, stimulates binding of mRNA and methionyl-tRNAi to the 40S ribosome. The eIF-3 complex specifically targets and initiates translation of a subset of mRNAs involved in cell proliferation. The sequence is that of Eukaryotic translation initiation factor 3 subunit H (eif3h) from Salmo salar (Atlantic salmon).